Here is a 616-residue protein sequence, read N- to C-terminus: Adenylosuccinate synthetase 2 (616 aa).

Positions 1 to 26 are disordered; that stretch reads MDKQAERDQSAGPVKTPQETQPPAHN. Polar residues predominate over residues 17–26; that stretch reads PQETQPPAHN. Residues 87–93 and 117–119 contribute to the GTP site; these read GDEGKGK and GHT. Catalysis depends on D88, which acts as the Proton acceptor. The Mg(2+) site is built by D88 and G117. IMP is bound by residues 88 to 91, 115 to 118, T202, K216, Q328, T343, and K472; these read DEGK and NAGH. Residue H118 is the Proton donor of the active site. A substrate-binding site is contributed by 468 to 474; that stretch reads AVTKKPR. Residues R474 and 603–605 each bind GTP; that span reads GNG.

It belongs to the adenylosuccinate synthetase family. Homodimer. The cofactor is Mg(2+).

Its subcellular location is the cytoplasm. It catalyses the reaction IMP + L-aspartate + GTP = N(6)-(1,2-dicarboxyethyl)-AMP + GDP + phosphate + 2 H(+). Its pathway is purine metabolism; AMP biosynthesis via de novo pathway; AMP from IMP: step 1/2. In terms of biological role, plays an important role in the salvage pathway for purine nucleotide biosynthesis. Catalyzes the first committed step in the biosynthesis of AMP from IMP. The polypeptide is Adenylosuccinate synthetase 2 (Trypanosoma cruzi (strain CL Brener)).